A 1203-amino-acid chain; its full sequence is DNA-directed RNA polymerase subunit beta (1203 aa).

Basic and acidic residues predominate over residues 1174–1195; it reads AAQEAKAAFEAEEAEKATKAEA. The disordered stretch occupies residues 1174–1203; the sequence is AAQEAKAAFEAEEAEKATKAEATEEAAEQE.

Belongs to the RNA polymerase beta chain family. The RNAP catalytic core consists of 2 alpha, 1 beta, 1 beta' and 1 omega subunit. When a sigma factor is associated with the core the holoenzyme is formed, which can initiate transcription.

It catalyses the reaction RNA(n) + a ribonucleoside 5'-triphosphate = RNA(n+1) + diphosphate. Its function is as follows. DNA-dependent RNA polymerase catalyzes the transcription of DNA into RNA using the four ribonucleoside triphosphates as substrates. The chain is DNA-directed RNA polymerase subunit beta from Streptococcus pneumoniae (strain P1031).